The primary structure comprises 334 residues: MKIAVDGMGGDFAPKEVVAGCVDALNENKDLHIVITGKEELIKKELEGHNYDEDRIEVLDAREVISTNDSPVMAIRRKKDSSLNKGLQLVKEKKVEGIISAGSTGAFMAGSLFIVGRIKGIDRPALAPIMPGKNAPFMVIDVGANAECKPQNLLQFALMGKIYFEKILNVKNPTIGLVNIGVEEEKGTELTKEAYKLLKNSGLNFIGNVEPRDIPTGDVNILVCDGFTGNTILKTYEGVAQNIFEILKAEIMSSFQGKIGGALLKPSFKNIKKKFNYKEYGGAAFIGVEGICVKAHGSSDRKAFKNAIKQCINFHKGNIINNIKEELVNIETLH.

This sequence belongs to the PlsX family. Homodimer. Probably interacts with PlsY.

It localises to the cytoplasm. The catalysed reaction is a fatty acyl-[ACP] + phosphate = an acyl phosphate + holo-[ACP]. The protein operates within lipid metabolism; phospholipid metabolism. Catalyzes the reversible formation of acyl-phosphate (acyl-PO(4)) from acyl-[acyl-carrier-protein] (acyl-ACP). This enzyme utilizes acyl-ACP as fatty acyl donor, but not acyl-CoA. The sequence is that of Phosphate acyltransferase from Clostridium tetani (strain Massachusetts / E88).